A 274-amino-acid polypeptide reads, in one-letter code: Cytochrome b-c1 complex subunit Rieske, mitochondrial (274 aa).

Residues S79–S103 are Mitochondrial matrix-facing. A helical membrane pass occupies residues R104 to M140. The Mitochondrial intermembrane portion of the chain corresponds to S141–G274. The Rieske domain occupies E187–V272. C217, H219, C236, H239, and S241 together coordinate [2Fe-2S] cluster. A disulfide bridge links C222 with C238.

The protein belongs to the Rieske iron-sulfur protein family. In terms of assembly, component of the ubiquinol-cytochrome c oxidoreductase (cytochrome b-c1 complex, complex III, CIII), a multisubunit enzyme composed of 11 subunits. The complex is composed of 3 respiratory subunits cytochrome b, cytochrome c1 and Rieske protein UQCRFS1, 2 core protein subunits UQCRC1/QCR1 and UQCRC2/QCR2, and 6 low-molecular weight protein subunits UQCRH/QCR6, UQCRB/QCR7, UQCRQ/QCR8, UQCR10/QCR9, UQCR11/QCR10 and subunit 9, the cleavage product of Rieske protein UQCRFS1. The complex exists as an obligatory dimer and forms supercomplexes (SCs) in the inner mitochondrial membrane with NADH-ubiquinone oxidoreductase (complex I, CI) and cytochrome c oxidase (complex IV, CIV), resulting in different assemblies (supercomplex SCI(1)III(2)IV(1) and megacomplex MCI(2)III(2)IV(2)). Incorporation of the Rieske protein UQCRFS1 is the penultimate step in complex III assembly. Interacts with TTC19, which is involved in the clearance of UQCRFS1 fragments. Component of the ubiquinol-cytochrome c oxidoreductase (cytochrome b-c1 complex, complex III, CIII). Subunit 9 corresponds to the mitochondrial targeting sequence (MTS) of Rieske protein UQCRFS1. It is retained after processing and incorporated inside complex III, where it remains bound to the complex and localizes between the 2 core subunits UQCRC1/QCR1 and UQCRC2/QCR2. [2Fe-2S] cluster serves as cofactor. Proteolytic processing is necessary for the correct insertion of UQCRFS1 in the complex III dimer. Several fragments are generated during UQCRFS1 insertion, most probably due to the endogenous matrix-processing peptidase (MPP) activity of the 2 core protein subunits UQCRC1/QCR1 and UQCRC2/QCR2, which are homologous to the 2 mitochondrial-processing peptidase (MPP) subunits beta-MPP and alpha-MPP respectively. The action of the protease is also necessary for the clearance of the UQCRFS1 fragments.

The protein resides in the mitochondrion inner membrane. It carries out the reaction a quinol + 2 Fe(III)-[cytochrome c](out) = a quinone + 2 Fe(II)-[cytochrome c](out) + 2 H(+)(out). Its function is as follows. Component of the ubiquinol-cytochrome c oxidoreductase, a multisubunit transmembrane complex that is part of the mitochondrial electron transport chain which drives oxidative phosphorylation. The respiratory chain contains 3 multisubunit complexes succinate dehydrogenase (complex II, CII), ubiquinol-cytochrome c oxidoreductase (cytochrome b-c1 complex, complex III, CIII) and cytochrome c oxidase (complex IV, CIV), that cooperate to transfer electrons derived from NADH and succinate to molecular oxygen, creating an electrochemical gradient over the inner membrane that drives transmembrane transport and the ATP synthase. The cytochrome b-c1 complex catalyzes electron transfer from ubiquinol to cytochrome c, linking this redox reaction to translocation of protons across the mitochondrial inner membrane, with protons being carried across the membrane as hydrogens on the quinol. In the process called Q cycle, 2 protons are consumed from the matrix, 4 protons are released into the intermembrane space and 2 electrons are passed to cytochrome c. The Rieske protein is a catalytic core subunit containing a [2Fe-2S] iron-sulfur cluster. It cycles between 2 conformational states during catalysis to transfer electrons from the quinol bound in the Q(0) site in cytochrome b to cytochrome c1. Incorporation of UQCRFS1 is the penultimate step in complex III assembly. Functionally, component of the ubiquinol-cytochrome c oxidoreductase (cytochrome b-c1 complex, complex III, CIII). UQCRFS1 undergoes proteolytic processing once it is incorporated in the complex III dimer. One of the fragments, called subunit 9, corresponds to its mitochondrial targeting sequence (MTS). The proteolytic processing is necessary for the correct insertion of UQCRFS1 in the complex III dimer, but the persistence of UQCRFS1-derived fragments may prevent newly imported UQCRFS1 to be processed and assembled into complex III and is detrimental for the complex III structure and function. In Theropithecus gelada (Gelada baboon), this protein is Cytochrome b-c1 complex subunit Rieske, mitochondrial (UQCRFS1).